The following is a 480-amino-acid chain: Siroheme synthase (480 aa).

The precorrin-2 dehydrogenase /sirohydrochlorin ferrochelatase stretch occupies residues 1–203 (MNYFPIFANL…QQTAQAEQEL (203 aa)). NAD(+) contacts are provided by residues 22–23 (SV) and 43–44 (NQ). Phosphoserine is present on serine 128. The uroporphyrinogen-III C-methyltransferase stretch occupies residues 214 to 480 (GFVSLVGAGP…GGLNAGQRAA (267 aa)). Proline 223 provides a ligand contact to S-adenosyl-L-methionine. Aspartate 246 (proton acceptor) is an active-site residue. Residue lysine 268 is the Proton donor of the active site. Residues 299-301 (GGD), valine 304, 329-330 (TA), methionine 381, and glycine 410 contribute to the S-adenosyl-L-methionine site.

It in the N-terminal section; belongs to the precorrin-2 dehydrogenase / sirohydrochlorin ferrochelatase family. The protein in the C-terminal section; belongs to the precorrin methyltransferase family.

It catalyses the reaction uroporphyrinogen III + 2 S-adenosyl-L-methionine = precorrin-2 + 2 S-adenosyl-L-homocysteine + H(+). It carries out the reaction precorrin-2 + NAD(+) = sirohydrochlorin + NADH + 2 H(+). The catalysed reaction is siroheme + 2 H(+) = sirohydrochlorin + Fe(2+). Its pathway is cofactor biosynthesis; adenosylcobalamin biosynthesis; precorrin-2 from uroporphyrinogen III: step 1/1. The protein operates within cofactor biosynthesis; adenosylcobalamin biosynthesis; sirohydrochlorin from precorrin-2: step 1/1. It participates in porphyrin-containing compound metabolism; siroheme biosynthesis; precorrin-2 from uroporphyrinogen III: step 1/1. It functions in the pathway porphyrin-containing compound metabolism; siroheme biosynthesis; siroheme from sirohydrochlorin: step 1/1. Its pathway is porphyrin-containing compound metabolism; siroheme biosynthesis; sirohydrochlorin from precorrin-2: step 1/1. Its function is as follows. Multifunctional enzyme that catalyzes the SAM-dependent methylations of uroporphyrinogen III at position C-2 and C-7 to form precorrin-2 via precorrin-1. Then it catalyzes the NAD-dependent ring dehydrogenation of precorrin-2 to yield sirohydrochlorin. Finally, it catalyzes the ferrochelation of sirohydrochlorin to yield siroheme. This is Siroheme synthase from Neisseria meningitidis serogroup C (strain 053442).